A 346-amino-acid polypeptide reads, in one-letter code: Ly6/PLAUR domain-containing protein 3 (346 aa).

Positions 1–30 (MDPARKAGAQAMIWTAGWLLLLLLRGGAQA) are cleaved as a signal peptide. 2 UPAR/Ly6 domains span residues 33-126 (CYSC…ALDP) and 140-222 (CYSC…SRCN). Residues Asn118, Asn163, Asn176, and Asn183 are each glycosylated (N-linked (GlcNAc...) asparagine). The interval 233–324 (PRIPPLVRLP…KGGPQQPHNK (92 aa)) is disordered. Pro residues predominate over residues 234 to 246 (RIPPLVRLPPPEP). Low complexity predominate over residues 247 to 269 (TTVASTTSVTTSTSAPVRPTSTT). Positions 283-295 (GVEHEASRDEEPR) are enriched in basic and acidic residues. Cys326 is lipidated: GPI-anchor amidated cysteine. Positions 327 to 346 (VAPTAGLAALLLAVAAGVLL) are cleaved as a propeptide — removed in mature form.

As to quaternary structure, binds laminin-1 and laminin-5. Interacts with LGALS3. Interacts with AGR2 and AGR3. Post-translationally, N-glycosylated and O-glycosylated. In terms of tissue distribution, expressed in placenta, skin and urothelium. Found in suprabasal keratinocytes of chronic wounds. Weak expression is found in esophagus and peripheral blood mononuclear cells. Found in the majority of primary and metastatic transitional cell carcinomas (TCCs) and as well in breast cancer tissues, but not in adjacent normal tissues. High expression is found in the tumor component of some noninvasive superficial lesions and in invasive and metastatic urothelial cancers.

It localises to the cell membrane. In terms of biological role, supports cell migration. May be involved in urothelial cell-matrix interactions. May be involved in tumor progression. This chain is Ly6/PLAUR domain-containing protein 3 (LYPD3), found in Homo sapiens (Human).